An 84-amino-acid chain; its full sequence is Large ribosomal subunit protein bL31B (84 aa).

This sequence belongs to the bacterial ribosomal protein bL31 family. Type B subfamily. As to quaternary structure, part of the 50S ribosomal subunit.

The protein is Large ribosomal subunit protein bL31B of Parabacteroides distasonis (strain ATCC 8503 / DSM 20701 / CIP 104284 / JCM 5825 / NCTC 11152).